Reading from the N-terminus, the 327-residue chain is Peptidyl-prolyl isomerase CWC27 (327 aa).

The region spanning T8 to I158 is the PPIase cyclophilin-type domain. The disordered stretch occupies residues A223–D307. Composition is skewed to basic and acidic residues over residues G228–T269 and M277–P296.

It belongs to the cyclophilin-type PPIase family. CWC27 subfamily. In terms of assembly, associated with the spliceosome.

Its subcellular location is the cytoplasm. It is found in the nucleus. It catalyses the reaction [protein]-peptidylproline (omega=180) = [protein]-peptidylproline (omega=0). PPIases accelerate the folding of proteins. It catalyzes the cis-trans isomerization of proline imidic peptide bonds in oligopeptides. Involved in pre-mRNA splicing. This is Peptidyl-prolyl isomerase CWC27 (CWC27) from Debaryomyces hansenii (strain ATCC 36239 / CBS 767 / BCRC 21394 / JCM 1990 / NBRC 0083 / IGC 2968) (Yeast).